A 706-amino-acid chain; its full sequence is mRNA (2'-O-methyladenosine-N(6)-)-methyltransferase (706 aa).

The segment at 1–34 (MANENHGSPREGASLLSHSPGTSSQSQPCSPKPV) is disordered. Over residues 16–29 (LSHSPGTSSQSQPC) the composition is skewed to polar residues. S30 carries the phosphoserine modification. Residues 43 to 77 (ELVHAGWEKCWSRRESRPYYFNRFTNQSLWEMPVL) enclose the WW domain. The disordered stretch occupies residues 88-148 (GLNATPLPQD…QSVPSSPSIP (61 aa)). A Nuclear localization signal motif is present at residues 109–113 (KSRKR). A Phosphoserine modification is found at S116. Positions 132–147 (IPVTPTSQSVPSSPSI) are enriched in low complexity. T152 carries the post-translational modification Phosphothreonine. R234 and R264 together coordinate substrate. 552–555 (NPPF) lines the S-adenosyl-L-methionine pocket. Substrate contacts are provided by residues E557 and 587 to 591 (WREPP). Residue 613–615 (FEH) participates in S-adenosyl-L-methionine binding. Positions 663-706 (TAAYKQSGRSHGSSSSSSSSSSSSEAKDRDSGREQGPSREPHPT) are disordered. The Nuclear localization signal signature appears at 668-686 (QSGRSHGSSSSSSSSSSSS). Low complexity predominate over residues 675-686 (SSSSSSSSSSSS). The span at 687–706 (EAKDRDSGREQGPSREPHPT) shows a compositional bias: basic and acidic residues.

Belongs to the CAPAM family. As to quaternary structure, interacts with POLR2A; interacts with the phosphorylated C-terminal domain (CTD) of POLR2A.

The protein resides in the nucleus. It catalyses the reaction a 5'-end (N(7)-methyl 5'-triphosphoguanosine)-(2'-O-methyladenosine) in mRNA + S-adenosyl-L-methionine = a 5'-end (N(7)-methyl 5'-triphosphoguanosine)-(N(6),2'-O-dimethyladenosine) in mRNA + S-adenosyl-L-homocysteine + H(+). With respect to regulation, cap-specific adenosine methyltransferase activity is inhibited by zinc. Its function is as follows. Cap-specific adenosine methyltransferase that catalyzes formation of N(6),2'-O-dimethyladenosine cap (m6A(m)) by methylating the adenosine at the second transcribed position of capped mRNAs. Recruited to the early elongation complex of RNA polymerase II (RNAPII) via interaction with POLR2A and mediates formation of m6A(m) co-transcriptionally. The protein is mRNA (2'-O-methyladenosine-N(6)-)-methyltransferase of Mus musculus (Mouse).